Here is a 321-residue protein sequence, read N- to C-terminus: Probable nucleosome assembly protein (321 aa).

Residues 272–298 (EENDYDFGEDFEDEEGEDDDEEDDEEE) show a composition bias toward acidic residues. Residues 272–321 (EENDYDFGEDFEDEEGEDDDEEDDEEEQTIKKPSGKGKAQPQQPQDCKQQ) form a disordered region. Residues 311-321 (QPQQPQDCKQQ) show a composition bias toward low complexity.

It belongs to the nucleosome assembly protein (NAP) family.

Its subcellular location is the nucleus. In terms of biological role, may modulate chromatin structure by regulation of histone octamer formation. In Dictyostelium discoideum (Social amoeba), this protein is Probable nucleosome assembly protein (nap1).